We begin with the raw amino-acid sequence, 505 residues long: TBC1 domain family member 22B (505 aa).

An N-acetylalanine modification is found at Ala2. 2 positions are modified to phosphoserine: Ser58 and Ser116. A disordered region spans residues 105 to 146 (SKLRVKPERSQSTTSDVPANYKVIKSSSDAQLSRNSSDTCLR). Polar residues predominate over residues 129 to 146 (KSSSDAQLSRNSSDTCLR). Ser154 is subject to Phosphoserine. Positions 210–434 (GVPREVRPIT…RLWDTYQSEP (225 aa)) constitute a Rab-GAP TBC domain.

In terms of assembly, interacts with ACBD3 and ARFGEF1. Interacts with YWHAB, YWHAE, YWHAG, YWHAH, YWHAQ and YWHAZ.

May act as a GTPase-activating protein for Rab family protein(s). The protein is TBC1 domain family member 22B (TBC1D22B) of Homo sapiens (Human).